Reading from the N-terminus, the 87-residue chain is Phosphoribosyl-ATP pyrophosphatase (87 aa).

Belongs to the PRA-PH family.

Its subcellular location is the cytoplasm. It catalyses the reaction 1-(5-phospho-beta-D-ribosyl)-ATP + H2O = 1-(5-phospho-beta-D-ribosyl)-5'-AMP + diphosphate + H(+). Its pathway is amino-acid biosynthesis; L-histidine biosynthesis; L-histidine from 5-phospho-alpha-D-ribose 1-diphosphate: step 2/9. In Corynebacterium diphtheriae (strain ATCC 700971 / NCTC 13129 / Biotype gravis), this protein is Phosphoribosyl-ATP pyrophosphatase.